A 178-amino-acid polypeptide reads, in one-letter code: Bifunctional protein PyrR (178 aa).

Substrate is bound by residues 41-42, 103-111, and R136; these read RR and DDVLYTGRT. The PRPP-binding motif lies at 99–111; it reads VILVDDVLYTGRT.

This sequence belongs to the purine/pyrimidine phosphoribosyltransferase family. PyrR subfamily. As to quaternary structure, homodimer and homohexamer; in equilibrium.

It catalyses the reaction UMP + diphosphate = 5-phospho-alpha-D-ribose 1-diphosphate + uracil. Its function is as follows. Regulates transcriptional attenuation of the pyrimidine nucleotide (pyr) operon by binding in a uridine-dependent manner to specific sites on pyr mRNA. This disrupts an antiterminator hairpin in the RNA and favors formation of a downstream transcription terminator, leading to a reduced expression of downstream genes. Also displays a weak uracil phosphoribosyltransferase activity which is not physiologically significant. The protein is Bifunctional protein PyrR of Clostridium acetobutylicum (strain ATCC 824 / DSM 792 / JCM 1419 / IAM 19013 / LMG 5710 / NBRC 13948 / NRRL B-527 / VKM B-1787 / 2291 / W).